The following is a 389-amino-acid chain: Succinate--CoA ligase [ADP-forming] subunit beta (389 aa).

Positions 9–244 (KELLRQFNVP…IDEEDAAEIE (236 aa)) constitute an ATP-grasp domain. Residues K46, 53–55 (GRG), E99, A102, and E107 each bind ATP. Mg(2+) is bound by residues N199 and D213. Substrate-binding positions include N264 and 321 to 323 (GIM).

Belongs to the succinate/malate CoA ligase beta subunit family. Heterotetramer of two alpha and two beta subunits. It depends on Mg(2+) as a cofactor.

The catalysed reaction is succinate + ATP + CoA = succinyl-CoA + ADP + phosphate. The enzyme catalyses GTP + succinate + CoA = succinyl-CoA + GDP + phosphate. It participates in carbohydrate metabolism; tricarboxylic acid cycle; succinate from succinyl-CoA (ligase route): step 1/1. In terms of biological role, succinyl-CoA synthetase functions in the citric acid cycle (TCA), coupling the hydrolysis of succinyl-CoA to the synthesis of either ATP or GTP and thus represents the only step of substrate-level phosphorylation in the TCA. The beta subunit provides nucleotide specificity of the enzyme and binds the substrate succinate, while the binding sites for coenzyme A and phosphate are found in the alpha subunit. This Polynucleobacter asymbioticus (strain DSM 18221 / CIP 109841 / QLW-P1DMWA-1) (Polynucleobacter necessarius subsp. asymbioticus) protein is Succinate--CoA ligase [ADP-forming] subunit beta.